Here is a 456-residue protein sequence, read N- to C-terminus: Adenylosuccinate synthetase isozyme 2 (456 aa).

The interval 1-24 (MAFAETNPAASSLPNGDCGRPRAR) is disordered. GTP-binding positions include 39-45 (GDEGKGK) and 67-69 (GHT). Asp-40 functions as the Proton acceptor in the catalytic mechanism. Mg(2+) contacts are provided by Asp-40 and Gly-67. Asp-40 serves as a coordination point for substrate. IMP is bound by residues 40–43 (DEGK), 65–68 (NAGH), Thr-162, Arg-176, Asn-255, Thr-270, and Arg-334. The Proton donor role is filled by His-68. Position 330-336 (330-336 (VTTGRKR)) interacts with substrate. Residues Arg-336, 362–364 (KLD), and 444–447 (GVGK) each bind GTP.

Belongs to the adenylosuccinate synthetase family. As to quaternary structure, homodimer. Mg(2+) is required as a cofactor. As to expression, widely expressed.

It localises to the cytoplasm. The protein localises to the mitochondrion. The catalysed reaction is IMP + L-aspartate + GTP = N(6)-(1,2-dicarboxyethyl)-AMP + GDP + phosphate + 2 H(+). Its pathway is purine metabolism; AMP biosynthesis via de novo pathway; AMP from IMP: step 1/2. Its activity is regulated as follows. Inhibited competitively by AMP and IMP and non-competitively by fructose 1,6-bisphosphate. Plays an important role in the de novo pathway and in the salvage pathway of purine nucleotide biosynthesis. Catalyzes the first committed step in the biosynthesis of AMP from IMP. This Sus scrofa (Pig) protein is Adenylosuccinate synthetase isozyme 2.